A 103-amino-acid polypeptide reads, in one-letter code: uncharacterized protein (103 aa).

Residues 1-10 (MVVKKSKPKN) are compositionally biased toward basic residues. 2 disordered regions span residues 1 to 38 (MVVKKSKPKNQIRVEDLDLPKLNTSKNPQTKIQKKGKK) and 77 to 103 (AVFSKQSDRKISNNKADKKTGRKNEKK).

This is an uncharacterized protein from Schizosaccharomyces pombe (strain 972 / ATCC 24843) (Fission yeast).